A 28-amino-acid chain; its full sequence is Dermaseptin-SP1 (28 aa).

Expressed by the skin glands.

The protein resides in the secreted. Functionally, probable antimicrobial peptide which stimulates insulin-release in glucose-responsive BRIN-BD 11 cells. The chain is Dermaseptin-SP1 from Agalychnis spurrelli (Gliding leaf frog).